Consider the following 295-residue polypeptide: 5,10-methylenetetrahydrofolate reductase (295 aa).

Catalysis depends on Glu28, which acts as the Proton donor/acceptor. Thr59 contributes to the NADH binding site. Residues His89, Arg119, Gly120, Asp121, Ala133, Tyr153, His157, Ala160, Asp166, Asn169, Arg172, and Lys173 each contribute to the FAD site. Residue Asp121 participates in (6S)-5-methyl-5,6,7,8-tetrahydrofolate binding. NADH is bound at residue Gln184. (6S)-5-methyl-5,6,7,8-tetrahydrofolate contacts are provided by Gln184, Gln220, and Lys280.

Belongs to the methylenetetrahydrofolate reductase family. The cofactor is FAD.

It carries out the reaction (6S)-5-methyl-5,6,7,8-tetrahydrofolate + NAD(+) = (6R)-5,10-methylene-5,6,7,8-tetrahydrofolate + NADH + H(+). The protein operates within one-carbon metabolism; tetrahydrofolate interconversion. It participates in amino-acid biosynthesis; L-methionine biosynthesis via de novo pathway. Catalyzes the NADH-dependent reduction of 5,10-methylenetetrahydrofolate to 5-methyltetrahydrofolate. Is required to provide the methyl group necessary for methionine synthetase to convert homocysteine to methionine; the methyl group is given by 5-methyltetrahydrofolate. This chain is 5,10-methylenetetrahydrofolate reductase (metF), found in Buchnera aphidicola subsp. Baizongia pistaciae (strain Bp).